We begin with the raw amino-acid sequence, 352 residues long: Cell division protein ZipA (352 aa).

Residues 1 to 5 (MQELR) are Periplasmic-facing. A helical transmembrane segment spans residues 6–26 (LVLIIVGALAISALLLHGLWT). Residues 27-352 (SRKEKPAKFG…REKAKLYSQA (326 aa)) are Cytoplasmic-facing. A compositionally biased stretch (basic and acidic residues) spans 35–54 (FGEKPLGKLDDSNRDTEGFD). The tract at residues 35–56 (FGEKPLGKLDDSNRDTEGFDHT) is disordered.

It belongs to the ZipA family. As to quaternary structure, interacts with FtsZ via their C-terminal domains.

The protein resides in the cell inner membrane. Functionally, essential cell division protein that stabilizes the FtsZ protofilaments by cross-linking them and that serves as a cytoplasmic membrane anchor for the Z ring. Also required for the recruitment to the septal ring of downstream cell division proteins. The chain is Cell division protein ZipA from Photobacterium profundum (strain SS9).